Reading from the N-terminus, the 277-residue chain is Large ribosomal subunit protein uL2 (277 aa).

A disordered region spans residues 222–277 (GVAMNPVDHPHGGGEGRTSGGRHPVSPWGKPTKGKRTRSNKATDKFIMRSRHQRKK).

This sequence belongs to the universal ribosomal protein uL2 family. In terms of assembly, part of the 50S ribosomal subunit. Forms a bridge to the 30S subunit in the 70S ribosome.

One of the primary rRNA binding proteins. Required for association of the 30S and 50S subunits to form the 70S ribosome, for tRNA binding and peptide bond formation. It has been suggested to have peptidyltransferase activity; this is somewhat controversial. Makes several contacts with the 16S rRNA in the 70S ribosome. The chain is Large ribosomal subunit protein uL2 from Bartonella bacilliformis (strain ATCC 35685 / KC583 / Herrer 020/F12,63).